A 117-amino-acid chain; its full sequence is Large ribosomal subunit protein uL18 (117 aa).

The protein belongs to the universal ribosomal protein uL18 family. As to quaternary structure, part of the 50S ribosomal subunit; part of the 5S rRNA/L5/L18/L25 subcomplex. Contacts the 5S and 23S rRNAs.

Functionally, this is one of the proteins that bind and probably mediate the attachment of the 5S RNA into the large ribosomal subunit, where it forms part of the central protuberance. This Halorhodospira halophila (strain DSM 244 / SL1) (Ectothiorhodospira halophila (strain DSM 244 / SL1)) protein is Large ribosomal subunit protein uL18.